A 490-amino-acid polypeptide reads, in one-letter code: MINASLTELRAALDARKISSVELATLFLDRIERLDASLNAFITVDRDGALEAARAADARIAAGDAGPLTGIPLAHKDVFCTEGVLTTCGSKMLANFVSPYDAHVVSLLKTAGAVSLGKTNMDEFAMGSSNENSHFGPAKNPWDTTRIPGGSSGGSAAAVAARLVPIATGTDTGGSVRQPAALTGVTGIKPTYGVVSRYGMIAYASSLDQGGAFGASAADCAQLLTAMAGFDPRDSTSLERPAEDYSRELAAPAAARPLAGLRIGLPKEFFGAGMADDVRAAVEAALDGYRALGATTVDVSLPNAQLAIPAYYVIAPAEASSNLSRFDGVRYGHRAAEYRDLAEMYSKSRAEGFGAEVKRRILVGTYVLSHGYYDAYYLQAQKLRRLIAQDFQAALAGCDVIAGPTSPTTAWTIGEKSDDPVQMYLSDIYTIAVNLAGLPGLSHPCGFGAGELPVGLQLVGDYFSEARLLNAAHRFQQASDWHLRRPAIAA.

Active-site charge relay system residues include Lys76 and Ser151. The active-site Acyl-ester intermediate is the Ser175.

This sequence belongs to the amidase family. GatA subfamily. In terms of assembly, heterotrimer of A, B and C subunits.

The enzyme catalyses L-glutamyl-tRNA(Gln) + L-glutamine + ATP + H2O = L-glutaminyl-tRNA(Gln) + L-glutamate + ADP + phosphate + H(+). Functionally, allows the formation of correctly charged Gln-tRNA(Gln) through the transamidation of misacylated Glu-tRNA(Gln) in organisms which lack glutaminyl-tRNA synthetase. The reaction takes place in the presence of glutamine and ATP through an activated gamma-phospho-Glu-tRNA(Gln). The protein is Glutamyl-tRNA(Gln) amidotransferase subunit A of Aromatoleum aromaticum (strain DSM 19018 / LMG 30748 / EbN1) (Azoarcus sp. (strain EbN1)).